Reading from the N-terminus, the 601-residue chain is NADPH--cytochrome P450 reductase (601 aa).

A Flavodoxin-like domain is found at 25-169; sequence IVVFYGSQTG…DFVTWREQFW (145 aa). FMN contacts are provided by residues 31–36, 83–86, 118–127, and aspartate 153; these read SQTGTG, ATYG, and LGDKTYEHYN. Positions 224-425 constitute an FAD-binding FR-type domain; it reads KNPFLAPVTV…ICAVLVEYXT (202 aa). Residues 399 to 402, 417 to 419, tyrosine 423, and 427 to 430 each bind FAD; these read RYYS, CAV, and GVAT. Residues threonine 458, 519–520, 525–529, and aspartate 562 each bind NADP(+); these read SR and KVYVQ. Tryptophan 600 lines the FAD pocket.

It belongs to the NADPH--cytochrome P450 reductase family. The protein in the N-terminal section; belongs to the flavodoxin family. In the C-terminal section; belongs to the flavoprotein pyridine nucleotide cytochrome reductase family. FAD serves as cofactor. The cofactor is FMN.

Its subcellular location is the endoplasmic reticulum membrane. It carries out the reaction 2 oxidized [cytochrome P450] + NADPH = 2 reduced [cytochrome P450] + NADP(+) + H(+). This enzyme is required for electron transfer from NADP to cytochrome P450 in microsomes. It can also provide electron transfer to heme oxygenase and cytochrome B5. In Salmo trutta (Brown trout), this protein is NADPH--cytochrome P450 reductase.